Consider the following 152-residue polypeptide: Protein-export protein SecB (152 aa).

Belongs to the SecB family. Homotetramer, a dimer of dimers. One homotetramer interacts with 1 SecA dimer.

Its subcellular location is the cytoplasm. Functionally, one of the proteins required for the normal export of preproteins out of the cell cytoplasm. It is a molecular chaperone that binds to a subset of precursor proteins, maintaining them in a translocation-competent state. It also specifically binds to its receptor SecA. The protein is Protein-export protein SecB of Rickettsia conorii (strain ATCC VR-613 / Malish 7).